The primary structure comprises 95 residues: Small ribosomal subunit protein bS20 (95 aa).

The disordered stretch occupies residues 1–22 (MANIKSQIKRNRTNENNRLRNK). Over residues 12 to 22 (RTNENNRLRNK) the composition is skewed to basic and acidic residues.

This sequence belongs to the bacterial ribosomal protein bS20 family.

Functionally, binds directly to 16S ribosomal RNA. The chain is Small ribosomal subunit protein bS20 from Tropheryma whipplei (strain TW08/27) (Whipple's bacillus).